Reading from the N-terminus, the 270-residue chain is Phosphoserine phosphatase (270 aa).

The active-site Nucleophile is the aspartate 67. Mg(2+) contacts are provided by aspartate 67 and aspartate 69. Aspartate 69 serves as the catalytic Proton donor. Substrate contacts are provided by residues glutamate 76, arginine 112, serine 156–glycine 157, and lysine 205. Mg(2+) is bound at residue aspartate 227.

It belongs to the HAD-like hydrolase superfamily. SerB family. Requires Mg(2+) as cofactor.

The enzyme catalyses O-phospho-L-serine + H2O = L-serine + phosphate. It catalyses the reaction O-phospho-D-serine + H2O = D-serine + phosphate. It participates in amino-acid biosynthesis; L-serine biosynthesis; L-serine from 3-phospho-D-glycerate: step 3/3. Catalyzes the last step in the biosynthesis of serine from carbohydrates. The reaction mechanism proceeds via the formation of a phosphoryl-enzyme intermediates. The sequence is that of Phosphoserine phosphatase (aay) from Drosophila melanogaster (Fruit fly).